Consider the following 243-residue polypeptide: Probable transcriptional regulatory protein Athe_0816 (243 aa).

This sequence belongs to the TACO1 family.

Its subcellular location is the cytoplasm. The sequence is that of Probable transcriptional regulatory protein Athe_0816 from Caldicellulosiruptor bescii (strain ATCC BAA-1888 / DSM 6725 / KCTC 15123 / Z-1320) (Anaerocellum thermophilum).